The sequence spans 417 residues: UDP-N-acetylglucosamine 1-carboxyvinyltransferase (417 aa).

22-23 (KN) lines the phosphoenolpyruvate pocket. Arg93 is a binding site for UDP-N-acetyl-alpha-D-glucosamine. The Proton donor role is filled by Cys117. Cys117 is modified (2-(S-cysteinyl)pyruvic acid O-phosphothioketal). Residues 122-126 (RPVDQ), Asp304, and Ile326 contribute to the UDP-N-acetyl-alpha-D-glucosamine site.

This sequence belongs to the EPSP synthase family. MurA subfamily.

It is found in the cytoplasm. The catalysed reaction is phosphoenolpyruvate + UDP-N-acetyl-alpha-D-glucosamine = UDP-N-acetyl-3-O-(1-carboxyvinyl)-alpha-D-glucosamine + phosphate. It participates in cell wall biogenesis; peptidoglycan biosynthesis. Cell wall formation. Adds enolpyruvyl to UDP-N-acetylglucosamine. This is UDP-N-acetylglucosamine 1-carboxyvinyltransferase from Laribacter hongkongensis (strain HLHK9).